The following is a 202-amino-acid chain: Imidazoleglycerol-phosphate dehydratase (202 aa).

It belongs to the imidazoleglycerol-phosphate dehydratase family.

The protein resides in the cytoplasm. It catalyses the reaction D-erythro-1-(imidazol-4-yl)glycerol 3-phosphate = 3-(imidazol-4-yl)-2-oxopropyl phosphate + H2O. It participates in amino-acid biosynthesis; L-histidine biosynthesis; L-histidine from 5-phospho-alpha-D-ribose 1-diphosphate: step 6/9. In Synechococcus sp. (strain CC9605), this protein is Imidazoleglycerol-phosphate dehydratase.